The primary structure comprises 260 residues: Snake venom serine protease KN5 (260 aa).

The signal sequence occupies residues 1 to 18 (MVLIRVLANLLILQLSYA). Residues 19-24 (QKSSEL) constitute a propeptide that is removed on maturation. The Peptidase S1 domain occupies 25–251 (VIGGDECNIN…HLDWIQSIIA (227 aa)). Disulfide bonds link cysteine 31-cysteine 165, cysteine 100-cysteine 258, cysteine 144-cysteine 212, cysteine 176-cysteine 191, and cysteine 202-cysteine 227. The Charge relay system role is filled by histidine 67. N-linked (GlcNAc...) asparagine glycosylation is present at asparagine 105. Aspartate 112 acts as the Charge relay system in catalysis. Asparagine 124 and asparagine 172 each carry an N-linked (GlcNAc...) asparagine glycan. Serine 206 functions as the Charge relay system in the catalytic mechanism. N-linked (GlcNAc...) asparagine glycosylation is found at asparagine 213 and asparagine 255.

It belongs to the peptidase S1 family. Snake venom subfamily. In terms of assembly, monomer. Expressed by the venom gland.

It is found in the secreted. In terms of biological role, snake venom serine protease that may act in the hemostasis system of the prey. This Trimeresurus stejnegeri (Chinese green tree viper) protein is Snake venom serine protease KN5.